We begin with the raw amino-acid sequence, 275 residues long: tRNA pseudouridine synthase A (275 aa).

The active-site Nucleophile is aspartate 56. Tyrosine 114 is a substrate binding site.

It belongs to the tRNA pseudouridine synthase TruA family. As to quaternary structure, homodimer.

It carries out the reaction uridine(38/39/40) in tRNA = pseudouridine(38/39/40) in tRNA. Functionally, formation of pseudouridine at positions 38, 39 and 40 in the anticodon stem and loop of transfer RNAs. This is tRNA pseudouridine synthase A from Polynucleobacter asymbioticus (strain DSM 18221 / CIP 109841 / QLW-P1DMWA-1) (Polynucleobacter necessarius subsp. asymbioticus).